The primary structure comprises 1890 residues: METGPNAEIELLERVLLRLGNADSDEKLEAAVGKFLTPVILKMNSPHNVVRTKVVEVLTHIKRRLSSRGHVQIPVEALLDQYAAQDSSTFLKNFAIIFITMGFPRLALEQQTALASKVVGCEDKLESYQDKLFALLLPVLSDMKIPDDPTQRSKLLDLQDKPAICANFLALLQDVLLLPYGITQEQDVPPGLSPYSFTRIIAYNWRAEELEKVKKGIVRFLCASVFSDLQIFVPLVVASADTRFSVATPAITELSKLCTMLDFSNPAVTAPLYTLFAGNQSKITDRQTRPCCARVRQKLLQYLIKCRGKSINVTKGLQVTFDGFFGTNTNQKCKVLALQFMELLLRDGPRELVSKVSKVILTGITKIIGRDSNEPNDVQNAAYSALAQHARSFPQDVSQDLKLVLGYFNNLASCAPELHSSIREALVSMAPAFAWKTKEKSDAMEVDKNVDSSSVKLDGQQHLLLAMLLDNAESKVQIVQNVTSVFLTSCYPEYYAPARYLLLLIAGERNSLRENVTTYLYGTSKKDHINYSMLSSIDHSKNRISSESISDFNHLSLEQRRVMLPSFQVMMSHVHEMAEKRLKKNTACVVVGRTKLPYSLEVYEELLDYLRLCLWYSAGVVAAPGDEKYTHELREYITLHYEDTEDNALHQYAQFVQRSVEAKRSESNLICLYDLLNAAPELFAAKQLHLLEPLGNTLKDVSETMRINVAQVYGILWAFGLSDEKFDEEVGECLNSLTQKTLEHKHGWLLVVGHTFNRKIAMLKQENKTKDFAAWPQFVNAVKIISKCLCESQWLLVSAAVKCISMIGKAVEIPNVPVEIQVPSKDGDDDDEEMTEYTSIDSSTKLVIFGVVFQLLRSSSARQKIREDSARCLGYLAIGDGEHFTKRNLDKFLTLTKIQKDAALNIAISEAIVNTLCGYDVNKGQPDEKFVNKHCNDDDFDQFLNSLIRLVTDPNPHSRQAISVWLLAVVKHCSQRPAVLAKKELLQFAFTELLSDDSEFVQDVASRGLGLVYSISDSGSQSDLANSLLDQLIGGKRKVNQVTADTELFAEGMLGKTPTGGNITTYKELCSLASDLNQPDMIYQFMQLANHNATWTSKLGAAFGLKTLSAESRQKMEPYLGKIIPRLYRYKYDPTPKIQNSMISIWDTIVTDSKEVTERYYWEILRELLDNLTCKEWRVRIACCLAVRDLLNRPNGLKLRSEEPVRRALPDNSMEVDEVPEPELKELWFQLFRVMDDIHEGTRVAAHGTASFLGKLCVIASSSDHGKSGTAVASSILPFLLETGVGHKVPEIRRVSIKTISDMIDSSGSLIAPHLATLIPCLLRATGELENTKLSYVSTRLGADNEAQEAVDTLRAEAAKSLHTMETIGKCVRYIDYSVLEKMTPEVLELMKGSVNLGTKIGCAHFVCLISIRLGKEMTPLVGKYIRACFVGIKNRNATVRKYNASAIGHLLGLAKEQSIKSLFTKLEELYAEQPGNRSIALTIQSINKRHHELLKDYMDSMLPLIFFAMHEEPNEETKANVELWKDLWHDVSPGDAGIRLNLNVIIPKLESSLTDASWSRKAQAANAIQTIATRLSSSLDEPDRLRLIKLLLSGLQGRTFEGKERLLQALAALTKGLDRNHQICSSIIDAAMREARKREPVYRTMALASLGEILDQLEADRFEEVYNMSWNLLEKKELRKESDDEDEPNTSQELSADERNKRAQTLNRLKEVVWETLGKSWPRHSIETQHRYQLFFAENCTSILAESTRPVQVSLLAALTKYIERLHVFDESAQVPDLTQINQEKKIKTEETAPKTREAIVEKICTDVLAAVALAAGVPHSGLKKEALNIVLMLIKRLSGSGNGNQQPLRLIKQSFESNLEKFQRDSAPEIRCRIKDIEDKLSKLNPQN.

18 HEAT repeats span residues 6 to 29 (NAEIELLERVLLRLGNADSDEKLE), 30 to 67 (AAVGKFLTPVILKMNSPHNVVRTKVVEVLTHIKRRLSS), 130 to 167 (DKLFALLLPVLSDMKIPDDPTQRSKLLDLQDKPAICAN), 226 to 263 (FSDLQIFVPLVVASADTRFSVATPAITELSKLCTMLDF), 294 to 330 (RVRQKLLQYLIKCRGKSINVTKGLQVTFDGFFGTNTN), 334 to 354 (KVLALQFMELLLRDGPRELVS), 355 to 395 (KVSK…SFPQ), 459 to 496 (GQQHLLLAMLLDNAESKVQIVQNVTSVFLTSCYPEYYA), 498 to 523 (ARYLLLLIAGERNSLRENVTTYLYGT), 524 to 561 (SKKDHINYSMLSSIDHSKNRISSESISDFNHLSLEQRR), 565 to 602 (PSFQVMMSHVHEMAEKRLKKNTACVVVGRTKLPYSLEV), 685 to 722 (AKQLHLLEPLGNTLKDVSETMRINVAQVYGILWAFGLS), 776 to 813 (PQFVNAVKIISKCLCESQWLLVSAAVKCISMIGKAVEI), 843 to 882 (STKLVIFGVVFQLLRSSSARQKIREDSARCLGYLAIGDGE), 938 to 975 (DDFDQFLNSLIRLVTDPNPHSRQAISVWLLAVVKHCSQ), 980 to 1018 (LAKKELLQFAFTELLSDDSEFVQDVASRGLGLVYSISDS), 1118 to 1155 (PYLGKIIPRLYRYKYDPTPKIQNSMISIWDTIVTDSKE), and 1159 to 1196 (RYYWEILRELLDNLTCKEWRVRIACCLAVRDLLNRPNG). Phosphoserine is present on Ser-1213. HEAT repeat units follow at residues 1271–1309 (AVASSILPFLLETGVGHKVPEIRRVSIKTISDMIDSSGS), 1313–1350 (PHLATLIPCLLRATGELENTKLSYVSTRLGADNEAQEA), 1378–1415 (SVLEKMTPEVLELMKGSVNLGTKIGCAHFVCLISIRLG), 1416–1457 (KEMT…LAKE), 1497–1534 (DYMDSMLPLIFFAMHEEPNEETKANVELWKDLWHDVSP), 1541–1578 (LNLNVIIPKLESSLTDASWSRKAQAANAIQTIATRLSS), 1583–1620 (PDRLRLIKLLLSGLQGRTFEGKERLLQALAALTKGLDR), and 1623–1660 (QICSSIIDAAMREARKREPVYRTMALASLGEILDQLEA). The interval 1680–1702 (RKESDDEDEPNTSQELSADERNK) is disordered. At Ser-1683 the chain carries Phosphoserine. Phosphothreonine is present on Thr-1691. Phosphoserine is present on Ser-1692. HEAT repeat units lie at residues 1751–1788 (PVQVSLLAALTKYIERLHVFDESAQVPDLTQINQEKKI) and 1826–1863 (KEALNIVLMLIKRLSGSGNGNQQPLRLIKQSFESNLEK).

Associated with the proteasome.

The protein resides in the cytoplasm. The polypeptide is Proteasome-associated protein ECM29 homolog (Drosophila melanogaster (Fruit fly)).